The chain runs to 191 residues: uncharacterized protein (191 aa).

This is an uncharacterized protein from Agrobacterium tumefaciens (strain Ach5).